The following is a 230-amino-acid chain: DNA mismatch repair protein MutH (230 aa).

This sequence belongs to the MutH family.

It is found in the cytoplasm. In terms of biological role, sequence-specific endonuclease that cleaves unmethylated GATC sequences. It is involved in DNA mismatch repair. In Citrobacter koseri (strain ATCC BAA-895 / CDC 4225-83 / SGSC4696), this protein is DNA mismatch repair protein MutH.